The following is a 504-amino-acid chain: uncharacterized protein (504 aa).

To M.thermoautotrophicum MTH1137.

This is an uncharacterized protein from Methanocaldococcus jannaschii (strain ATCC 43067 / DSM 2661 / JAL-1 / JCM 10045 / NBRC 100440) (Methanococcus jannaschii).